Reading from the N-terminus, the 653-residue chain is Thioredoxin domain-containing protein 3 homolog (653 aa).

A Thioredoxin domain is found at 9-114 (LQETLNTQEA…QETIQETLKN (106 aa)). Residues Cys38 and Cys41 are joined by a disulfide bond. Residues 155 to 299 (KQITVALIKP…FFFPDFKPPT (145 aa)) form an NDK 1 region. The disordered stretch occupies residues 300–323 (YRSAKSAASRASGRRSKTPSQKPR). A compositionally biased stretch (low complexity) spans 301–310 (RSAKSAASRA). NDK regions lie at residues 324 to 459 (LQRT…IFHV) and 459 to 597 (VEQT…QFDW). The tract at residues 603 to 653 (QAEEGEVNETSGEQPTDEQSGETEKTEEDGEHEGAQSDQQQAVSEAMEKEE) is disordered. Residues 617-633 (PTDEQSGETEKTEEDGE) show a composition bias toward acidic residues.

It in the C-terminal section; belongs to the NDK family. As to expression, testis-specific.

May be required during the final stages of sperm tail maturation. May act by reducing disulfide bonds within the sperm components. This Ciona intestinalis (Transparent sea squirt) protein is Thioredoxin domain-containing protein 3 homolog (CiIC3).